A 218-amino-acid chain; its full sequence is Thiopurine S-methyltransferase (218 aa).

S-adenosyl-L-methionine contacts are provided by W10, L45, E66, and R123.

The protein belongs to the class I-like SAM-binding methyltransferase superfamily. TPMT family.

Its subcellular location is the cytoplasm. The catalysed reaction is S-adenosyl-L-methionine + a thiopurine = S-adenosyl-L-homocysteine + a thiopurine S-methylether.. In Pseudomonas aeruginosa (strain ATCC 15692 / DSM 22644 / CIP 104116 / JCM 14847 / LMG 12228 / 1C / PRS 101 / PAO1), this protein is Thiopurine S-methyltransferase.